Reading from the N-terminus, the 154-residue chain is 6,7-dimethyl-8-ribityllumazine synthase (154 aa).

5-amino-6-(D-ribitylamino)uracil contacts are provided by residues phenylalanine 21, 55–57 (AFE), and 79–81 (CVI). 84–85 (AT) contacts (2S)-2-hydroxy-3-oxobutyl phosphate. The active-site Proton donor is histidine 87. Phenylalanine 112 contributes to the 5-amino-6-(D-ribitylamino)uracil binding site. Arginine 126 provides a ligand contact to (2S)-2-hydroxy-3-oxobutyl phosphate.

This sequence belongs to the DMRL synthase family. Forms an icosahedral capsid composed of 60 subunits, arranged as a dodecamer of pentamers.

It carries out the reaction (2S)-2-hydroxy-3-oxobutyl phosphate + 5-amino-6-(D-ribitylamino)uracil = 6,7-dimethyl-8-(1-D-ribityl)lumazine + phosphate + 2 H2O + H(+). It functions in the pathway cofactor biosynthesis; riboflavin biosynthesis; riboflavin from 2-hydroxy-3-oxobutyl phosphate and 5-amino-6-(D-ribitylamino)uracil: step 1/2. Its function is as follows. Catalyzes the formation of 6,7-dimethyl-8-ribityllumazine by condensation of 5-amino-6-(D-ribitylamino)uracil with 3,4-dihydroxy-2-butanone 4-phosphate. This is the penultimate step in the biosynthesis of riboflavin. This chain is 6,7-dimethyl-8-ribityllumazine synthase, found in Staphylococcus aureus (strain Newman).